We begin with the raw amino-acid sequence, 156 residues long: MNINLTLIGQAIAFAFFVAFCMKFVWPPLINAISERQRKIADGLNAAEKAKADLADAQAQVKQELDAAKAQAAQLIEQANRRAAQLIEEARTQAAAEGERIRQQAKEAVDQEINSAREELRQQVAALAVTGAEKILNQQVDAEAHNAMLSQLAAKL.

A helical transmembrane segment spans residues 5–25 (LTLIGQAIAFAFFVAFCMKFV).

The protein belongs to the ATPase B chain family. F-type ATPases have 2 components, F(1) - the catalytic core - and F(0) - the membrane proton channel. F(1) has five subunits: alpha(3), beta(3), gamma(1), delta(1), epsilon(1). F(0) has three main subunits: a(1), b(2) and c(10-14). The alpha and beta chains form an alternating ring which encloses part of the gamma chain. F(1) is attached to F(0) by a central stalk formed by the gamma and epsilon chains, while a peripheral stalk is formed by the delta and b chains.

Its subcellular location is the cell inner membrane. Its function is as follows. F(1)F(0) ATP synthase produces ATP from ADP in the presence of a proton or sodium gradient. F-type ATPases consist of two structural domains, F(1) containing the extramembraneous catalytic core and F(0) containing the membrane proton channel, linked together by a central stalk and a peripheral stalk. During catalysis, ATP synthesis in the catalytic domain of F(1) is coupled via a rotary mechanism of the central stalk subunits to proton translocation. Functionally, component of the F(0) channel, it forms part of the peripheral stalk, linking F(1) to F(0). The polypeptide is ATP synthase subunit b (Acinetobacter baumannii (strain AYE)).